Here is a 269-residue protein sequence, read N- to C-terminus: Putative pyruvate, phosphate dikinase regulatory protein (269 aa).

Gly153 to Thr160 provides a ligand contact to ADP.

It belongs to the pyruvate, phosphate/water dikinase regulatory protein family. PDRP subfamily.

The enzyme catalyses N(tele)-phospho-L-histidyl/L-threonyl-[pyruvate, phosphate dikinase] + ADP = N(tele)-phospho-L-histidyl/O-phospho-L-threonyl-[pyruvate, phosphate dikinase] + AMP + H(+). It catalyses the reaction N(tele)-phospho-L-histidyl/O-phospho-L-threonyl-[pyruvate, phosphate dikinase] + phosphate + H(+) = N(tele)-phospho-L-histidyl/L-threonyl-[pyruvate, phosphate dikinase] + diphosphate. Functionally, bifunctional serine/threonine kinase and phosphorylase involved in the regulation of the pyruvate, phosphate dikinase (PPDK) by catalyzing its phosphorylation/dephosphorylation. The polypeptide is Putative pyruvate, phosphate dikinase regulatory protein (Pediococcus pentosaceus (strain ATCC 25745 / CCUG 21536 / LMG 10740 / 183-1w)).